The primary structure comprises 727 residues: MNPTVIDAALARSFGLAAEEYDRVLAIMGRVPTLTELGIFSVMWSEHCSYKSSRIWLKTLPTTAPWVIHGPGENAGVVDIGEGRAAIFKMESHNHPSFIEPYQGAATGVGGILRDVFTMGARPVANLNALRFGDPSLPVTKRVVDGVVRGIGGYGNCVGVPTVGGETNFHPSYNGNPLVNAMTVGIADQDRIFLSAAAGIGNPVVYVGSKTGRDGIHGATMASAEFGADAEEKRPTVQVGDPFIEKLLIEACLELMATDAIVAIQDMGAAGLTSSSVEMAGKGGVGIELDLDSVPQREAGMSAYEMMLSESQERMLIVLKPGREDMARAIFEKWELDFAVIGRITDSGRIVVKHQGRTEADIELAPLADQAPLYERPWVEPAKPAPLGPVESPLPPGAALLALIGCPDLASRAWIWNQYDGTVGGQTLRRPGQADAAIVRIEGSRRALALTTDCTPRYCVADPETGGAQAVVESWRNITATGATPLAVTDNLNFGNPEKPAIMGQIVAAIRGMGEACRALDYPIVSGNVSLYNETEGTAILPTPAIGGLGVIDDGAAATGIALAPGLDLVLIGETSGELGASLFLREILRREDGAPPALDLAAEKRNGDFVRRQIHAGAIAACHDVSDGGLLVALAEMALAGNTGIALAAIPEGIAPHAFWFGEDQARYVAATADGAALIAEAAAAGIPARPLGRSGGDHLTGPDGIAISLSEIRAAHEAFFARWFA.

The active site involves His-47. Residues Tyr-50 and Lys-89 each coordinate ATP. Mg(2+) is bound at residue Glu-91. Residues 92–95 (SHNH) and Arg-114 contribute to the substrate site. His-93 functions as the Proton acceptor in the catalytic mechanism. Mg(2+) is bound at residue Asp-115. Residue Gln-238 participates in substrate binding. Residue Asp-266 participates in Mg(2+) binding. Residue 310-312 (ESQ) participates in substrate binding. Residues Asp-490 and Gly-527 each contribute to the ATP site. Position 528 (Asn-528) interacts with Mg(2+). Residue Ser-530 coordinates substrate.

Belongs to the FGAMS family. As to quaternary structure, monomer. Part of the FGAM synthase complex composed of 1 PurL, 1 PurQ and 2 PurS subunits.

Its subcellular location is the cytoplasm. It catalyses the reaction N(2)-formyl-N(1)-(5-phospho-beta-D-ribosyl)glycinamide + L-glutamine + ATP + H2O = 2-formamido-N(1)-(5-O-phospho-beta-D-ribosyl)acetamidine + L-glutamate + ADP + phosphate + H(+). Its pathway is purine metabolism; IMP biosynthesis via de novo pathway; 5-amino-1-(5-phospho-D-ribosyl)imidazole from N(2)-formyl-N(1)-(5-phospho-D-ribosyl)glycinamide: step 1/2. Functionally, part of the phosphoribosylformylglycinamidine synthase complex involved in the purines biosynthetic pathway. Catalyzes the ATP-dependent conversion of formylglycinamide ribonucleotide (FGAR) and glutamine to yield formylglycinamidine ribonucleotide (FGAM) and glutamate. The FGAM synthase complex is composed of three subunits. PurQ produces an ammonia molecule by converting glutamine to glutamate. PurL transfers the ammonia molecule to FGAR to form FGAM in an ATP-dependent manner. PurS interacts with PurQ and PurL and is thought to assist in the transfer of the ammonia molecule from PurQ to PurL. This chain is Phosphoribosylformylglycinamidine synthase subunit PurL, found in Acidiphilium cryptum (strain JF-5).